The sequence spans 195 residues: Imidazoleglycerol-phosphate dehydratase (195 aa).

Belongs to the imidazoleglycerol-phosphate dehydratase family.

The protein resides in the cytoplasm. The enzyme catalyses D-erythro-1-(imidazol-4-yl)glycerol 3-phosphate = 3-(imidazol-4-yl)-2-oxopropyl phosphate + H2O. It participates in amino-acid biosynthesis; L-histidine biosynthesis; L-histidine from 5-phospho-alpha-D-ribose 1-diphosphate: step 6/9. The polypeptide is Imidazoleglycerol-phosphate dehydratase (Bordetella bronchiseptica (strain ATCC BAA-588 / NCTC 13252 / RB50) (Alcaligenes bronchisepticus)).